The chain runs to 74 residues: Protein krueppel (74 aa).

C2H2-type zinc fingers lie at residues 1-4 (ERTH), 10-32 (FECP…MRLH), 38-60 (YHCS…LRVH), and 66-74 (YACELCAAK).

This sequence belongs to the krueppel C2H2-type zinc-finger protein family.

The protein localises to the nucleus. Functionally, krueppel is a gap class segmentation protein. The sequence is that of Protein krueppel (Kr) from Apis mellifera (Honeybee).